The following is a 156-amino-acid chain: Small ribosomal subunit protein uS7 (156 aa).

Belongs to the universal ribosomal protein uS7 family. As to quaternary structure, part of the 30S ribosomal subunit. Contacts proteins S9 and S11.

Functionally, one of the primary rRNA binding proteins, it binds directly to 16S rRNA where it nucleates assembly of the head domain of the 30S subunit. Is located at the subunit interface close to the decoding center, probably blocks exit of the E-site tRNA. This Aster yellows witches'-broom phytoplasma (strain AYWB) protein is Small ribosomal subunit protein uS7.